A 142-amino-acid chain; its full sequence is Transcription antitermination protein NusB (142 aa).

The protein belongs to the NusB family.

In terms of biological role, involved in transcription antitermination. Required for transcription of ribosomal RNA (rRNA) genes. Binds specifically to the boxA antiterminator sequence of the ribosomal RNA (rrn) operons. The chain is Transcription antitermination protein NusB from Trichlorobacter lovleyi (strain ATCC BAA-1151 / DSM 17278 / SZ) (Geobacter lovleyi).